The primary structure comprises 279 residues: Glutamate racemase (279 aa).

Substrate contacts are provided by residues 13-14 (DS) and 45-46 (YG). The active-site Proton donor/acceptor is the Cys76. 77–78 (NT) lines the substrate pocket. Cys185 (proton donor/acceptor) is an active-site residue. 186–187 (TH) is a substrate binding site.

Belongs to the aspartate/glutamate racemases family.

It carries out the reaction L-glutamate = D-glutamate. Its pathway is cell wall biogenesis; peptidoglycan biosynthesis. Its function is as follows. Provides the (R)-glutamate required for cell wall biosynthesis. The polypeptide is Glutamate racemase (Picosynechococcus sp. (strain ATCC 27264 / PCC 7002 / PR-6) (Agmenellum quadruplicatum)).